A 365-amino-acid chain; its full sequence is Phosphatidylcholine:ceramide cholinephosphotransferase 2 (365 aa).

Positions 1–14 (MDIIETAKLEEHLE) are enriched in basic and acidic residues. A disordered region spans residues 1-52 (MDIIETAKLEEHLENQPSDPTNTYTRPTEPVEEENKNGNGKPKSLSSGLRKG). Residues 15–26 (NQPSDPTNTYTR) show a composition bias toward polar residues. A run of 5 helical transmembrane segments spans residues 80–100 (GIAFIYAVFNLVLTTVMITVV), 128–148 (FSVSEINGIILVGLWITQWLF), 159–179 (FCFIIGTLYLYRCITMYVTTL), 218–240 (HILCGDFLFSGHTVTLTLTYLFI), and 248–268 (FWWYHLICWLLSAAGIICILV). Histidine 229 is an active-site residue. Catalysis depends on residues histidine 272 and aspartate 276. The helical transmembrane segment at 273 to 290 (YTVDVIIAYYITTRLFWW) threads the bilayer. Residues 291–365 (YHSMANEKNL…KIGEDNEKST (75 aa)) are Cytoplasmic-facing. 4 S-palmitoyl cysteine lipidation sites follow: cysteine 331, cysteine 332, cysteine 343, and cysteine 348.

This sequence belongs to the sphingomyelin synthase family. In terms of processing, palmitoylated on Cys-331, Cys-332, Cys-343 and Cys-348; which plays an important role in plasma membrane localization.

The protein resides in the cell membrane. The protein localises to the golgi apparatus membrane. It carries out the reaction an N-acylsphing-4-enine + a 1,2-diacyl-sn-glycero-3-phosphocholine = a sphingomyelin + a 1,2-diacyl-sn-glycerol. The enzyme catalyses an N-acylsphinganine + a 1,2-diacyl-sn-glycero-3-phosphocholine = an N-acylsphinganine-1-phosphocholine + a 1,2-diacyl-sn-glycerol. It catalyses the reaction an N-acyl-(4R)-4-hydroxysphinganine + a 1,2-diacyl-sn-glycero-3-phosphocholine = an N-acyl-(4R)-4-hydroxysphinganine-phosphocholine + a 1,2-diacyl-sn-glycerol. The catalysed reaction is an N-acylsphing-4-enine + a 1,2-diacyl-sn-glycero-3-phosphoethanolamine = an N-acylsphing-4-enine 1-phosphoethanolamine + a 1,2-diacyl-sn-glycerol. It carries out the reaction an N-acylsphinganine + a 1,2-diacyl-sn-glycero-3-phosphoethanolamine = an N-acylsphinganine-1-phosphoethanolamine + a 1,2-diacyl-sn-glycerol. The enzyme catalyses an N-acyl-(4R)-4-hydroxysphinganine + a 1,2-diacyl-sn-glycero-3-phosphoethanolamine = an N-acyl-(4R)-4-hydroxysphinganine-1-phosphoethanolamine + a 1,2-diacyl-sn-glycerol. It catalyses the reaction 1,2-dihexadecanoyl-sn-glycero-3-phosphocholine + an N-acylsphing-4-enine = 1,2-dihexadecanoyl-sn-glycerol + a sphingomyelin. The catalysed reaction is 1-(9Z-octadecenoyl)-2-acyl-sn-3-glycerol + a sphingomyelin = a 1-(9Z-octadecenoyl)-2-acyl-sn-glycero-3-phosphocholine + an N-acylsphing-4-enine. It carries out the reaction N-hexadecanoylsphinganine + a 1,2-diacyl-sn-glycero-3-phosphocholine = N-hexadecanoyl-sphinganine-1-phosphocholine + a 1,2-diacyl-sn-glycerol. The enzyme catalyses N-hexadecanoyl-(4R)-hydroxysphinganine + a 1,2-diacyl-sn-glycero-3-phosphocholine = N-hexadecanoyl-(4R)-hydroxysphinganine-phosphocholine + a 1,2-diacyl-sn-glycerol. It catalyses the reaction N-hexadecanoylsphinganine + a 1,2-diacyl-sn-glycero-3-phosphoethanolamine = N-hexadecanoyl-sphinganine-1-phosphoethanolamine + a 1,2-diacyl-sn-glycerol. The catalysed reaction is N-hexadecanoyl-(4R)-hydroxysphinganine + a 1,2-diacyl-sn-glycero-3-phosphoethanolamine = N-hexadecanoyl-(4R)-hydroxysphinganine-1-phosphoethanolamine + a 1,2-diacyl-sn-glycerol. It functions in the pathway sphingolipid metabolism. Functionally, sphingomyelin synthase that primarily contributes to sphingomyelin synthesis and homeostasis at the plasma membrane. Catalyzes the reversible transfer of phosphocholine moiety in sphingomyelin biosynthesis: in the forward reaction transfers phosphocholine head group of phosphatidylcholine (PC) on to ceramide (CER) to form ceramide phosphocholine (sphingomyelin, SM) and diacylglycerol (DAG) as by-product, and in the reverse reaction transfers phosphocholine from SM to DAG to form PC and CER. The direction of the reaction appears to depend on the levels of CER and DAG in the plasma membrane. Does not use free phosphorylcholine or CDP-choline as donors. Can also transfer phosphoethanolamine head group of phosphatidylethanolamine (PE) on to ceramide (CER) to form ceramide phosphoethanolamine (CPE). Regulates receptor-mediated signal transduction via mitogenic DAG and proapoptotic CER, as well as via SM, a structural component of membrane rafts that serve as platforms for signal transduction and protein sorting. To a lesser extent, plays a role in secretory transport via regulation of DAG pool at the Golgi apparatus and its downstream effects on PRKD1. Required for normal bone matrix mineralization. The polypeptide is Phosphatidylcholine:ceramide cholinephosphotransferase 2 (SGMS2) (Macaca fascicularis (Crab-eating macaque)).